We begin with the raw amino-acid sequence, 66 residues long: Large ribosomal subunit protein bL35 (66 aa).

The disordered stretch occupies residues 20–40 (GKVKHAQRGKRHGMIKRTKKQ).

This sequence belongs to the bacterial ribosomal protein bL35 family.

This chain is Large ribosomal subunit protein bL35, found in Nitrobacter winogradskyi (strain ATCC 25391 / DSM 10237 / CIP 104748 / NCIMB 11846 / Nb-255).